The following is a 148-amino-acid chain: Putative nickel-responsive regulator (148 aa).

Ni(2+)-binding residues include histidine 88, histidine 99, histidine 101, and cysteine 107.

It belongs to the transcriptional regulatory CopG/NikR family. Homotetramer. Ni(2+) serves as cofactor.

Transcriptional regulator. In Helicobacter pylori (strain ATCC 700392 / 26695) (Campylobacter pylori), this protein is Putative nickel-responsive regulator.